The following is a 978-amino-acid chain: Chaperone protein ClpB2, chloroplastic (978 aa).

The transit peptide at 1-76 (MAAAPPLAAG…RMPPRTLSVR (76 aa)) directs the protein to the chloroplast. The Clp R domain maps to 85-229 (TQQEFTEMAW…KTAIESIRGK (145 aa)). Repeat regions lie at residues 89–154 (FTEM…IQRQ) and 166–229 (LGRD…IRGK). The tract at residues 244 to 492 (LDKYGKDLTA…KLKMEITSKP (249 aa)) is i. ATP contacts are provided by residues 289–296 (GEPGVGKT) and 692–699 (GPTGVGKT). Residues 618-809 (VTQDDIAEIV…IIIMTSNVGS (192 aa)) are II.

The protein belongs to the ClpA/ClpB family.

Its subcellular location is the plastid. The protein localises to the chloroplast. Its function is as follows. Molecular chaperone that may play a role in chloroplast development. The chain is Chaperone protein ClpB2, chloroplastic (CLPB2) from Oryza sativa subsp. japonica (Rice).